We begin with the raw amino-acid sequence, 327 residues long: Flotillin-like protein FloA (327 aa).

Residues 7 to 27 form a helical membrane-spanning segment; sequence FLVPILIVILLLVFFSLVPVG.

The protein belongs to the flotillin-like FloA family. In terms of assembly, homooligomerizes.

It is found in the cell membrane. Its subcellular location is the membrane raft. Its function is as follows. Found in functional membrane microdomains (FMM) that may be equivalent to eukaryotic membrane rafts. FMMs are highly dynamic and increase in number as cells age. Flotillins are thought to be important factors in membrane fluidity. This chain is Flotillin-like protein FloA, found in Finegoldia magna (strain ATCC 29328 / DSM 20472 / WAL 2508) (Peptostreptococcus magnus).